Reading from the N-terminus, the 153-residue chain is Cytochrome c-type biogenesis protein CcmE (153 aa).

Over 1-8 (MTPVQRRR) the chain is Cytoplasmic. The chain crosses the membrane as a helical; Signal-anchor for type II membrane protein span at residues 9–29 (LAWVLLALLASGLATALVAMA). The Extracellular portion of the chain corresponds to 30-153 (LERNIAYLYT…DVPVTAPEVR (124 aa)). Heme-binding residues include His123 and Tyr127.

This sequence belongs to the CcmE/CycJ family.

It localises to the cell membrane. In terms of biological role, heme chaperone required for the biogenesis of c-type cytochromes. Transiently binds heme delivered by CcmC and transfers the heme to apo-cytochromes in a process facilitated by CcmF and CcmH. In Stenotrophomonas maltophilia (strain K279a), this protein is Cytochrome c-type biogenesis protein CcmE.